Reading from the N-terminus, the 247-residue chain is UPF0612 protein P20C8.01c (247 aa).

Coiled-coil stretches lie at residues 27-63 and 138-225; these read IKRY…MKYE and DTVQ…DARS.

Belongs to the UPF0612 family.

The protein localises to the cytoplasm. This chain is UPF0612 protein P20C8.01c, found in Schizosaccharomyces pombe (strain 972 / ATCC 24843) (Fission yeast).